The sequence spans 507 residues: tRNA (guanine(10)-N(2))-methyltransferase TRMT11 (507 aa).

Positions 459 to 475 are enriched in basic and acidic residues; the sequence is EKTKKKEQKKKSVENHL. A disordered region spans residues 459 to 507; sequence EKTKKKEQKKKSVENHLKSKNNNDVINNNSNDTNSNNNCNNENNIENQK. Residues 480 to 507 show a composition bias toward low complexity; it reads NNDVINNNSNDTNSNNNCNNENNIENQK.

Belongs to the class I-like SAM-binding methyltransferase superfamily. TRM11 methyltransferase family. Part of the heterodimeric TRMT11-TRM112 methyltransferase complex; this complex forms an active tRNA methyltransferase, where TRMT112 acts as an activator of the catalytic subunit TRMT11.

The protein localises to the cytoplasm. It catalyses the reaction guanosine(10) in tRNA + S-adenosyl-L-methionine = N(2)-methylguanosine(10) in tRNA + S-adenosyl-L-homocysteine + H(+). Catalytic subunit of the TRMT11-TRM112 methyltransferase complex, that specifically mediates the S-adenosyl-L-methionine-dependent N(2)-methylation of guanosine nucleotide at position 10 (m2G10) in tRNAs. This is one of the major tRNA (guanine-N(2))-methyltransferases. This is tRNA (guanine(10)-N(2))-methyltransferase TRMT11 (trmt11) from Dictyostelium discoideum (Social amoeba).